Consider the following 249-residue polypeptide: 2,3-bisphosphoglycerate-dependent phosphoglycerate mutase (249 aa).

Residues 9–16 (RHGQSQWN), 22–23 (TG), arginine 61, 88–91 (ERHY), lysine 99, 115–116 (RR), and 184–185 (GN) contribute to the substrate site. The active-site Tele-phosphohistidine intermediate is the histidine 10. Catalysis depends on glutamate 88, which acts as the Proton donor/acceptor.

It belongs to the phosphoglycerate mutase family. BPG-dependent PGAM subfamily. In terms of assembly, homodimer.

The enzyme catalyses (2R)-2-phosphoglycerate = (2R)-3-phosphoglycerate. It functions in the pathway carbohydrate degradation; glycolysis; pyruvate from D-glyceraldehyde 3-phosphate: step 3/5. In terms of biological role, catalyzes the interconversion of 2-phosphoglycerate and 3-phosphoglycerate. In Xanthomonas campestris pv. campestris (strain B100), this protein is 2,3-bisphosphoglycerate-dependent phosphoglycerate mutase.